A 741-amino-acid polypeptide reads, in one-letter code: MEHTHQYSWIIPFIPLPVPILLGVGLLLFPTVTKNLRRMWTFLSIFLLSIVMIFSLYLSIQQIFLSYIHQNVWSWAINNEFSFEFGYFIDPLTSIMSILITTVGILVLIYSDNNMSHDQGYLRFFAYMGFFNTSMLGLVTSSNLIQVYFFWELVGMCSYLLIGFWFTRPIPANACQKAFVTNRVGDFGLLLGILGLYWITGSFEFQDLFEIVNNLILNNRVNLLFLTLCAFLLFVGPIAKSAQFPLHVWLPDAMEGPTPISALIHAATMVAAGIFLVARLLPLFIVIPSIMYIISLIGIITVLLGATLALAQKDIKRGLAYSTMSQLGYMMLALGMGSYRSALFHLITHAYSKALLFLGSGSIIHSMEAIVGYSPDKSQNMILMGGLTKHVPITKTAFLVGTLSLCGIPPLACFWSKDEILNDSLLFSPIFAIIAYSTAGLTAFYMFRIYLLTFEGHLNTYFLNYSGKKSSSFYSISLWGKEEEQKLNRNFGLVPLLTMNNTKRVSFFGKKTYKISNNVTNQTFITVENFGLNTRTFYYPHESDNTILFPMLVLLLFTLFVGTIGIPFNQEGIDFDILSKLFTPSINLLHKNSQNFVDWYEFLQNVTFSVSIALFGIFIAYCLYKPFYSSLLNLTLLNSFKKWNSKRIGWEKLINFVYNWSYNRGYIDAFFKTSLTENIRRLAKQTNFFDKQIIDGITNGLGITSFFVGEVTKYIGGSRISSYLFLYLSYVLIFLRILFYF.

16 helical membrane-spanning segments follow: residues 9-29, 40-60, 89-109, 125-145, 147-167, 185-205, 221-241, 258-278, 280-300, 327-347, 354-374, 396-416, 425-445, 547-567, 602-622, and 720-740; these read WIIP…LLLF, WTFL…YLSI, IDPL…LVLI, FAYM…SNLI, VYFF…FWFT, GDFG…SFEF, VNLL…IAKS, TPIS…FLVA, LLPL…IGII, LGYM…FHLI, ALLF…VGYS, TAFL…CFWS, LLFS…TAFY, ILFP…IGIP, FLQN…IAYC, and ISSY…ILFY.

It belongs to the complex I subunit 5 family. NDH is composed of at least 16 different subunits, 5 of which are encoded in the nucleus.

Its subcellular location is the plastid. It is found in the chloroplast thylakoid membrane. The enzyme catalyses a plastoquinone + NADH + (n+1) H(+)(in) = a plastoquinol + NAD(+) + n H(+)(out). It carries out the reaction a plastoquinone + NADPH + (n+1) H(+)(in) = a plastoquinol + NADP(+) + n H(+)(out). NDH shuttles electrons from NAD(P)H:plastoquinone, via FMN and iron-sulfur (Fe-S) centers, to quinones in the photosynthetic chain and possibly in a chloroplast respiratory chain. The immediate electron acceptor for the enzyme in this species is believed to be plastoquinone. Couples the redox reaction to proton translocation, and thus conserves the redox energy in a proton gradient. The protein is NAD(P)H-quinone oxidoreductase subunit 5, chloroplastic (ndhF) of Arabis hirsuta (Hairy rock-cress).